Here is a 311-residue protein sequence, read N- to C-terminus: Ciliary microtubule inner protein 2B (311 aa).

Disordered regions lie at residues 64 to 93 (PFPPAPRGHSYNEASQELGGRRRRQRLGDP) and 150 to 183 (QEGRQPQTEHEKQLLTARHRTPLPALSKEPAPFM).

Belongs to the CIMIP2 family. Expressed in airway epithelial cells.

The protein resides in the cytoplasm. The protein localises to the cytoskeleton. Its subcellular location is the cilium axoneme. Its function is as follows. Microtubule inner protein (MIP) part of the dynein-decorated doublet microtubules (DMTs) in cilia axoneme, which is required for motile cilia beating. This chain is Ciliary microtubule inner protein 2B (cimip2b), found in Xenopus laevis (African clawed frog).